The primary structure comprises 510 residues: Probable inorganic carbon transporter subunit DabB (510 aa).

The next 14 membrane-spanning stretches (helical) occupy residues 9–29, 37–57, 68–88, 105–122, 125–145, 158–178, 204–224, 226–246, 266–286, 303–323, 355–375, 382–402, 410–430, and 446–466; these read TLLT…LLFL, FVHI…LALV, WHLD…GLII, YFAL…AWLS, LRFM…LIGL, ISGY…IWLF, TGIN…WPFQ, WLIE…AGLV, QIIL…ISLV, GFML…HLIL, LWMI…WFIT, LVSA…LVVF, IAGL…HNSL, and APAV…CTFV.

This sequence belongs to the inorganic carbon transporter (TC 9.A.2) DabB family. Forms a complex with DabA.

It localises to the cell membrane. In terms of biological role, part of an energy-coupled inorganic carbon pump. Expression of both dabA and dabB (DA2) restores growth in ambient air to E.coli deleted of its carbonic anhydrase genes (called CAfree, deletion of 'can' and 'cynT'). The protein is Probable inorganic carbon transporter subunit DabB of Bacillus anthracis.